Reading from the N-terminus, the 777-residue chain is Acyl-homoserine lactone acylase PvdQ (777 aa).

The signal sequence occupies residues 1 to 25 (MIISRQLPSFCLAALFLSFSGGAHA). A propeptide spans 196–218 (AGLPAEHWQLAAARQQRFALDRG) (spacer peptide). Catalysis depends on Ser-219, which acts as the Nucleophile.

This sequence belongs to the peptidase S45 family. In terms of assembly, heterodimer of an alpha subunit and a beta subunit processed from the same precursor.

The protein resides in the periplasm. It catalyses the reaction an N-acyl-L-homoserine lactone + H2O = L-homoserine lactone + a carboxylate. Catalyzes the deacylation of acyl-homoserine lactone (AHL or acyl-HSL), releasing homoserine lactone (HSL) and the corresponding fatty acid. Possesses a specificity for the degradation of long-chain acyl-HSLs (side chains of 11 to 14 carbons in length). This is Acyl-homoserine lactone acylase PvdQ (pvdQ) from Pseudomonas fluorescens (strain ATCC BAA-477 / NRRL B-23932 / Pf-5).